A 361-amino-acid chain; its full sequence is Monodechloroaminopyrrolnitrin synthase PrnB (361 aa).

222-225 (PGAV) contacts substrate. Position 313 (H313) interacts with heme. 2 residues coordinate substrate: Y321 and S332.

It belongs to the PrnB family. In terms of assembly, monomer. Heme b serves as cofactor.

The catalysed reaction is 7-chloro-L-tryptophan + AH2 + O2 = monodechloroaminopyrrolnitrin + A + CO2 + 2 H2O. Its pathway is antibiotic biosynthesis. Involved in the biosynthesis of the antifungal antibiotic pyrrolnitrin. Catalyzes the ring rearrangement and decarboxylation to convert 7-chloro-L-tryptophan (7-CLT) to monodechloroaminopyrrolnitrin (MDA). It can also use 7-chloro-D-tryptophan, but 7-chloro-L-tryptophan is the preferred natural enantiomer. The polypeptide is Monodechloroaminopyrrolnitrin synthase PrnB (prnB) (Pseudomonas fluorescens).